The chain runs to 576 residues: Arginine--tRNA ligase (576 aa).

The short motif at Pro-122–His-132 is the 'HIGH' region element.

The protein belongs to the class-I aminoacyl-tRNA synthetase family. In terms of assembly, monomer.

The protein localises to the cytoplasm. The enzyme catalyses tRNA(Arg) + L-arginine + ATP = L-arginyl-tRNA(Arg) + AMP + diphosphate. In Proteus mirabilis (strain HI4320), this protein is Arginine--tRNA ligase.